The following is a 257-amino-acid chain: Type III pantothenate kinase (257 aa).

Residue 11–18 (DSGNTAIK) coordinates ATP. Substrate is bound by residues Tyr96 and 103–106 (GCDR). Residue Asp105 is the Proton acceptor of the active site. Asp125 contacts K(+). Position 128 (Thr128) interacts with ATP. Thr179 provides a ligand contact to substrate.

Belongs to the type III pantothenate kinase family. As to quaternary structure, homodimer. The cofactor is NH4(+). It depends on K(+) as a cofactor.

Its subcellular location is the cytoplasm. The enzyme catalyses (R)-pantothenate + ATP = (R)-4'-phosphopantothenate + ADP + H(+). It participates in cofactor biosynthesis; coenzyme A biosynthesis; CoA from (R)-pantothenate: step 1/5. Catalyzes the phosphorylation of pantothenate (Pan), the first step in CoA biosynthesis. This Nitrosomonas eutropha (strain DSM 101675 / C91 / Nm57) protein is Type III pantothenate kinase.